The following is an 819-amino-acid chain: ATP-dependent DNA helicase PIF4 (819 aa).

The transit peptide at 1–84 directs the protein to the mitochondrion; the sequence is MLLNSTRTLL…RQASSAGHND (84 aa). The tract at residues 76-101 is disordered; it reads QASSAGHNDLGLQEKEKSSGDESAFS. 126–133 lines the ATP pocket; that stretch reads GGAGVGKS. A DNA-binding region spans residues 734-754; the sequence is HIIYVAASRVKKFSQLRMINV.

This sequence belongs to the helicase family. PIF1 subfamily. Monomer. Requires Mg(2+) as cofactor.

The protein localises to the mitochondrion matrix. The protein resides in the kinetoplast. The enzyme catalyses Couples ATP hydrolysis with the unwinding of duplex DNA at the replication fork by translocating in the 5'-3' direction. This creates two antiparallel DNA single strands (ssDNA). The leading ssDNA polymer is the template for DNA polymerase III holoenzyme which synthesizes a continuous strand.. The catalysed reaction is ATP + H2O = ADP + phosphate + H(+). Functionally, DNA-dependent ATPase and 5'-3' DNA helicase required for the maintenance of mitochondrial (kinetoplast) genome stability. This is ATP-dependent DNA helicase PIF4 from Trypanosoma brucei brucei (strain 927/4 GUTat10.1).